The following is a 680-amino-acid chain: NADPH--cytochrome P450 reductase (680 aa).

The Lumenal portion of the chain corresponds to 1 to 5 (MALDK). Residues 6–23 (LDLYVIITLVVAIAAYFA) form a helical membrane-spanning segment. At 24–680 (KNQFLDQQQD…VQNRYQEDVW (657 aa)) the chain is on the cytoplasmic side. The Flavodoxin-like domain occupies 60-204 (TLLLFGSQTG…DFLAWKDNVF (145 aa)). Residues 66-71 (SQTGTA), 117-120 (ATYG), 152-161 (LGNSTYEFFN), and Asp187 each bind FMN. An FAD-binding FR-type domain is found at 264–509 (THPFLARIVK…NGPRGKFSKF (246 aa)). Residue Arg283 participates in NADP(+) binding. Residues 439-442 (RYYS), 457-459 (TAV), and 473-476 (GVVT) contribute to the FAD site. NADP(+) contacts are provided by residues Thr537, 599-600 (SR), 606-610 (KVYVQ), and Asp642. Trp680 contacts FAD.

It belongs to the NADPH--cytochrome P450 reductase family. In the N-terminal section; belongs to the flavodoxin family. This sequence in the C-terminal section; belongs to the flavoprotein pyridine nucleotide cytochrome reductase family. FAD is required as a cofactor. FMN serves as cofactor.

It is found in the endoplasmic reticulum membrane. Its subcellular location is the mitochondrion outer membrane. The protein resides in the cell membrane. It carries out the reaction 2 oxidized [cytochrome P450] + NADPH = 2 reduced [cytochrome P450] + NADP(+) + H(+). Functionally, this enzyme is required for electron transfer from NADP to cytochrome P450 in microsomes. It can also provide electron transfer to heme oxygenase and cytochrome B5. Involved in ergosterol biosynthesis. The polypeptide is NADPH--cytochrome P450 reductase (Candida tropicalis (Yeast)).